The sequence spans 298 residues: Inosose dehydratase 2 (298 aa).

It belongs to the IolE/MocC family. Glutathione serves as cofactor. Co(2+) is required as a cofactor. It depends on Mn(2+) as a cofactor.

It catalyses the reaction scyllo-inosose = 3D-3,5/4-trihydroxycyclohexane-1,2-dione + H2O. It functions in the pathway polyol metabolism; myo-inositol degradation into acetyl-CoA; acetyl-CoA from myo-inositol: step 2/7. Functionally, catalyzes the dehydration of inosose (2-keto-myo-inositol, 2KMI or 2,4,6/3,5-pentahydroxycyclohexanone) to 3D-(3,5/4)-trihydroxycyclohexane-1,2-dione (D-2,3-diketo-4-deoxy-epi-inositol). The protein is Inosose dehydratase 2 of Bacillus cereus (strain ZK / E33L).